The sequence spans 480 residues: NADH-quinone oxidoreductase subunit N (480 aa).

Helical transmembrane passes span 10-30 (FISI…ILIE), 40-60 (WSSL…WGGI), 80-100 (FFTV…TAFF), 117-137 (AVFG…FLGI), 166-186 (LMGS…YGAI), 208-228 (VLFF…AALV), 246-266 (TAFM…RLFF), 276-296 (WNQV…FVAL), 304-324 (FFAY…VIGN), 330-350 (ALTF…AVLA), 374-394 (LASL…TAGF), 409-431 (YYGL…LRII), and 452-472 (IVGT…APFL).

The protein belongs to the complex I subunit 2 family. NDH-1 is composed of 14 different subunits. Subunits NuoA, H, J, K, L, M, N constitute the membrane sector of the complex.

The protein resides in the cell inner membrane. The catalysed reaction is a quinone + NADH + 5 H(+)(in) = a quinol + NAD(+) + 4 H(+)(out). Functionally, NDH-1 shuttles electrons from NADH, via FMN and iron-sulfur (Fe-S) centers, to quinones in the respiratory chain. The immediate electron acceptor for the enzyme in this species is believed to be ubiquinone. Couples the redox reaction to proton translocation (for every two electrons transferred, four hydrogen ions are translocated across the cytoplasmic membrane), and thus conserves the redox energy in a proton gradient. The chain is NADH-quinone oxidoreductase subunit N from Protochlamydia amoebophila (strain UWE25).